Consider the following 292-residue polypeptide: Elongation factor Ts (292 aa).

The involved in Mg(2+) ion dislocation from EF-Tu stretch occupies residues 79 to 82 (TDFV).

This sequence belongs to the EF-Ts family.

The protein localises to the cytoplasm. Its function is as follows. Associates with the EF-Tu.GDP complex and induces the exchange of GDP to GTP. It remains bound to the aminoacyl-tRNA.EF-Tu.GTP complex up to the GTP hydrolysis stage on the ribosome. This chain is Elongation factor Ts, found in Xanthomonas oryzae pv. oryzae (strain MAFF 311018).